The primary structure comprises 412 residues: Proteasome-activating nucleotidase 2 (412 aa).

A coiled-coil region spans residues 28–74 (LRQHFERMVDVNRELDQRLQNADDRHAELVDEVDQMKARNEALKTAS). ATP is bound by residues 196 to 201 (GTGKTM) and histidine 335. Positions 409 to 412 (DYQY) are docks into pockets in the proteasome alpha-ring to cause gate opening.

This sequence belongs to the AAA ATPase family. As to quaternary structure, homohexamer. The hexameric complex has a two-ring architecture resembling a top hat that caps the 20S proteasome core at one or both ends. Upon ATP-binding, the C-terminus of PAN interacts with the alpha-rings of the proteasome core by binding to the intersubunit pockets.

It is found in the cytoplasm. Functionally, ATPase which is responsible for recognizing, binding, unfolding and translocation of substrate proteins into the archaeal 20S proteasome core particle. Is essential for opening the gate of the 20S proteasome via an interaction with its C-terminus, thereby allowing substrate entry and access to the site of proteolysis. Thus, the C-termini of the proteasomal ATPase function like a 'key in a lock' to induce gate opening and therefore regulate proteolysis. Unfolding activity requires energy from ATP hydrolysis, whereas ATP binding alone promotes ATPase-20S proteasome association which triggers gate opening, and supports translocation of unfolded substrates. The polypeptide is Proteasome-activating nucleotidase 2 (Haloferax volcanii (strain ATCC 29605 / DSM 3757 / JCM 8879 / NBRC 14742 / NCIMB 2012 / VKM B-1768 / DS2) (Halobacterium volcanii)).